The primary structure comprises 88 residues: Small ribosomal subunit protein uS15 (88 aa).

This sequence belongs to the universal ribosomal protein uS15 family. In terms of assembly, part of the 30S ribosomal subunit. Forms a bridge to the 50S subunit in the 70S ribosome, contacting the 23S rRNA.

One of the primary rRNA binding proteins, it binds directly to 16S rRNA where it helps nucleate assembly of the platform of the 30S subunit by binding and bridging several RNA helices of the 16S rRNA. Its function is as follows. Forms an intersubunit bridge (bridge B4) with the 23S rRNA of the 50S subunit in the ribosome. This chain is Small ribosomal subunit protein uS15, found in Borreliella burgdorferi (strain ATCC 35210 / DSM 4680 / CIP 102532 / B31) (Borrelia burgdorferi).